The following is a 398-amino-acid chain: O-methyltransferase hmp5 (398 aa).

Residues 233 to 234 (GG), Glu261, and 283 to 284 (DF) each bind S-adenosyl-L-methionine. His303 (proton acceptor) is an active-site residue.

Belongs to the class I-like SAM-binding methyltransferase superfamily. Cation-independent O-methyltransferase family.

It participates in secondary metabolite biosynthesis. O-methyltransferase; part of the gene cluster that mediates the biosynthesis of hypothemycin, a resorcylic acid lactone (RAL) that irreversibly inhibits a subset of protein kinases with a conserved cysteine in the ATP binding site such as human ERK2. The first step is performed by both PKSs hmp3 and hmp8 and leads to the production of 7',8'-dehydrozearalenol (DHZ). The highly reducing PKS hpm8 synthesizes the reduced hexaketide (7S,11S,2E,8E)-7,11-dihydroxy-dodeca-2,8-dienoate, which is transferred downstream to the non-reducing PKS hpm3. Hpm3 then extends the reduced hexaketide to a nonaketide, after which regioselective cyclization and macrolactonization affords DHZ. The next step is the conversion of DHZ into aigialomycin C and is performed by the O-methyltransferase hmp5, the FAD-binding monooxygenase hmp7, and the cytochrome P450 monooxygenase hmp1. The wide substrate tolerance of the hmp5 and hmp7 implies that the reactions from DHZ to aigialomycin C can occur in any order. The steps from aigialomycin C to hypothemycin are less well established. The FAD-linked oxidoreductase hmp9 presumably catalyzes oxidation of the C-6' hydroxyl to a ketone. The timing of this oxidation is important, since the resulting enone functional group is a Michael acceptor that can react spontaneously with glutathione, an abundant metabolite in fungal cells. The glutathione S-transferase hmp2 catalyzes cis-trans isomerization of the 7',8' double bond with equilibrium favoring the trans isomer. The hpm6-encoded transporter might preferentially pump hypothemycin out of the cell relative to the trans isomer aigialomycin A. The cis-to-trans isomerization may be coupled with C-4' hydroxylation, since all known hypothemycin analogs containing the enone functional group also have hydroxyl groups at both C-4' and C-5'. The sequence is that of O-methyltransferase hmp5 from Hypomyces subiculosus (Nectria subiculosa).